Here is a 234-residue protein sequence, read N- to C-terminus: Cysteine proteinase inhibitor 6 (234 aa).

The N-terminal stretch at Met-1–Ala-24 is a signal peptide. Met-2 is subject to N-acetylalanine. 2 consecutive Cystatin domains span residues Gly-38–Ser-126 and Ser-145–Glu-215. The short motif at Gln-82–Gly-86 is the Secondary area of contact element. The tract at residues Ser-133–Asp-154 is disordered. Basic and acidic residues predominate over residues Gln-140–Asp-154. Ser-174 bears the Phosphoserine mark.

Belongs to the cystatin family. Phytocystatin subfamily.

It is found in the secreted. Specific inhibitor of cysteine proteinases. Probably involved in the regulation of endogenous processes and in defense against pests and pathogens. The sequence is that of Cysteine proteinase inhibitor 6 (CYS6) from Arabidopsis thaliana (Mouse-ear cress).